The primary structure comprises 339 residues: Phosphate acyltransferase (339 aa).

This sequence belongs to the PlsX family. In terms of assembly, homodimer. Probably interacts with PlsY.

It localises to the cytoplasm. The enzyme catalyses a fatty acyl-[ACP] + phosphate = an acyl phosphate + holo-[ACP]. It participates in lipid metabolism; phospholipid metabolism. Its function is as follows. Catalyzes the reversible formation of acyl-phosphate (acyl-PO(4)) from acyl-[acyl-carrier-protein] (acyl-ACP). This enzyme utilizes acyl-ACP as fatty acyl donor, but not acyl-CoA. The polypeptide is Phosphate acyltransferase (Tolumonas auensis (strain DSM 9187 / NBRC 110442 / TA 4)).